Here is a 404-residue protein sequence, read N- to C-terminus: Cysteine desulfurase IscS (404 aa).

Pyridoxal 5'-phosphate-binding positions include A75–T76, N155, Q183, and S203–H205. K206 carries the post-translational modification N6-(pyridoxal phosphate)lysine. T243 contacts pyridoxal 5'-phosphate. The Cysteine persulfide intermediate role is filled by C328. C328 contacts [2Fe-2S] cluster.

This sequence belongs to the class-V pyridoxal-phosphate-dependent aminotransferase family. NifS/IscS subfamily. In terms of assembly, homodimer. Forms a heterotetramer with IscU, interacts with other sulfur acceptors. It depends on pyridoxal 5'-phosphate as a cofactor.

The protein resides in the cytoplasm. The catalysed reaction is (sulfur carrier)-H + L-cysteine = (sulfur carrier)-SH + L-alanine. The protein operates within cofactor biosynthesis; iron-sulfur cluster biosynthesis. Its function is as follows. Master enzyme that delivers sulfur to a number of partners involved in Fe-S cluster assembly, tRNA modification or cofactor biosynthesis. Catalyzes the removal of elemental sulfur atoms from cysteine to produce alanine. Functions as a sulfur delivery protein for Fe-S cluster synthesis onto IscU, an Fe-S scaffold assembly protein, as well as other S acceptor proteins. This chain is Cysteine desulfurase IscS, found in Shewanella sp. (strain MR-4).